Here is a 20-residue protein sequence, read N- to C-terminus: VKVYNQFGTKVELGVSMRIF.

Its subcellular location is the cell outer membrane. The chain is 39 kDa major outer membrane protein from Aggregatibacter actinomycetemcomitans (Actinobacillus actinomycetemcomitans).